The following is a 221-amino-acid chain: UPF0319 protein NTHI1987 (221 aa).

The signal sequence occupies residues 1–21 (MKLRAVVLGLATLCTSTATFA).

It belongs to the UPF0319 family.

In Haemophilus influenzae (strain 86-028NP), this protein is UPF0319 protein NTHI1987.